Reading from the N-terminus, the 251-residue chain is Probable transcriptional regulatory protein Caul_0780 (251 aa).

This sequence belongs to the TACO1 family.

It is found in the cytoplasm. In Caulobacter sp. (strain K31), this protein is Probable transcriptional regulatory protein Caul_0780.